The following is a 685-amino-acid chain: Phenoloxidase subunit 1 (685 aa).

Positions 1 to 51 (MSDAKNNLLLFFDRPSEPCFMQKGEENAVFEIPDNYYPEKYQRVSNAIGNR) are excised as a propeptide. An N-linked (GlcNAc...) asparagine glycan is attached at Asn-184. Cu cation is bound by residues His-209, His-213, and His-239. Asn-254 and Asn-324 each carry an N-linked (GlcNAc...) asparagine glycan. The active-site Proton acceptor is the Glu-351. Cu cation contacts are provided by His-366, His-370, and His-406. N-linked (GlcNAc...) asparagine glycosylation is found at Asn-491 and Asn-540. Intrachain disulfides connect Cys-581–Cys-623 and Cys-583–Cys-630.

In terms of assembly, heterodimer. Cu(2+) serves as cofactor. Post-translationally, the N-terminus is blocked. In terms of tissue distribution, synthesized by hemocytes and released into the hemolymph plasma.

The protein resides in the secreted. The catalysed reaction is 2 L-dopa + O2 = 2 L-dopaquinone + 2 H2O. It carries out the reaction L-tyrosine + O2 = L-dopaquinone + H2O. This is a copper-containing oxidase that functions in the formation of pigments such as melanins and other polyphenolic compounds. Catalyzes the rate-limiting conversions of tyrosine to DOPA, DOPA to DOPA-quinone and possibly 5,6 dihydroxyindole to indole-5'6 quinone. This Bombyx mori (Silk moth) protein is Phenoloxidase subunit 1.